The primary structure comprises 839 residues: Katanin p80 WD40 repeat-containing subunit B1 homolog KTN80.3 (839 aa).

WD repeat units lie at residues 14 to 54 (AHSA…AILS), 57 to 96 (GHSSGIDSVTFDASEGLVAAGAASGTIKLWDLEEAKVVRT), 99 to 138 (GHRSNCVSVNFHPFGEFFASGSLDTNLKIWDIRKKGCIHT), 141 to 182 (GHTR…HEFK), 184 to 222 (HEGKIQSLDFHPHEFLLATGSADKTVKFWDLETFELIGS), 225 to 265 (TETT…DGVD), and 267 to 304 (GWSNLSDMNVHEGKLLGCSYNQNCVGVWVVDLSRTEPM). The DWD box motif lies at 115 to 131 (FFASGSLDTNLKIWDIR). 4 disordered regions span residues 303–340 (PMSGGATQSNSHPEKTSGSGRDQAGLNDNSSKVILGKL), 357–435 (GKLS…KSAS), 501–561 (LQSK…RTNK), and 575–648 (SLVR…PSNM). Composition is skewed to polar residues over residues 307-334 (GATQSNSHPEKTSGSGRDQAGLNDNSSK), 375-385 (TGRSSVSQSSD), 411-435 (TLSSTGSVSDSPHRVTLTSAPKSAS), 501-533 (LQSKAADSRRLSSSRNEPDLPTSSLLERSQSQP), 589-602 (DLISYNANRDSSPT), and 630-648 (VSSSSGGNMTAPNSRPSNM).

Belongs to the WD repeat KATNB1 family. In terms of assembly, component of KTN80-KTN1 complexes composed of a hexamer of KTN1-KTN80 heterodimers that sense microtubule (MT) geometry to confer precise MT severing. Interacts directly with AAA1/KTN1 and KTN80.1, and weakly with KTN80.4. In terms of tissue distribution, expressed in siliques, flowers, leaves, stems and roots.

Its subcellular location is the cytoplasm. The protein localises to the cytoskeleton. In terms of biological role, may participate in a complex which severs microtubules in an ATP-dependent manner. Microtubule severing may promote rapid reorganization of cellular microtubule arrays. Confers precision to microtubule (MT) severing by specific targeting of KTN1 to MT cleavage sites such as crossover or branching nucleation sites. Together with other KTN80s, regulates cell elongation by modulating MT organization. This chain is Katanin p80 WD40 repeat-containing subunit B1 homolog KTN80.3, found in Arabidopsis thaliana (Mouse-ear cress).